The chain runs to 379 residues: Alcohol dehydrogenase class-P (379 aa).

Ser-2 bears the N-acetylserine mark. A Zn(2+)-binding site is contributed by Cys-47. Thr-49 serves as a coordination point for an alcohol. Residue Thr-49 coordinates NAD(+). Positions 50, 69, 70, 99, 102, 105, 113, and 177 each coordinate Zn(2+). His-69 contributes to the an alcohol binding site. Residues Val-206 and Asp-226 each contribute to the NAD(+) site. Residue Ser-229 is modified to Phosphoserine. NAD(+) contacts are provided by Arg-231, Thr-272, Val-295, Val-297, Thr-320, Phe-322, and Arg-372.

Belongs to the zinc-containing alcohol dehydrogenase family. Class-P subfamily. As to quaternary structure, homodimer. The cofactor is Zn(2+). In terms of processing, glutathionylated. As to expression, root specific. Also detected in etiolated seedlings and leaves in cold conditions.

It localises to the cytoplasm. It carries out the reaction a primary alcohol + NAD(+) = an aldehyde + NADH + H(+). It catalyses the reaction a secondary alcohol + NAD(+) = a ketone + NADH + H(+). The enzyme catalyses ethanol + NAD(+) = acetaldehyde + NADH + H(+). Its activity is regulated as follows. Alcohol dehydrogenase activity show inverse correlation with the decreasing availability of oxygen. Slightly repressed by thiol-modifying agents N-ethylmaleimide (NEM) and 5,5-dithio-bis-(2-nitrobenzoic acid) (DTNB), as well as by methyl methanethiosulfonate (MMTS) in a dose-dependent manner. Inhibited by hydrogen peroxide H(2)O(2). Functionally, alcohol dehydrogenase catalyzing the reduction of toxic aldehydes to the corresponding alcohols. Mostly active on ethanol (EtOH), but exhibits broad substrate selectivity for primary and secondary alcohols (e.g. cinnamyl alcohol, octanol, geraniol, butanol, propyl alcohol, pentanol, isopentanol, ethylene glycol, isopropanol, methanol and tertiary butyl alcohol). Also catalyzes the reverse reaction to convert allyl alcohol to highly toxic acryl-aldehyde. Required for survival and acclimation in hypoxic conditions, especially in roots. Not able to catalyze NADH-dependent degradation of S-nitrosoglutathione (GSNO). This chain is Alcohol dehydrogenase class-P, found in Arabidopsis thaliana (Mouse-ear cress).